Here is a 312-residue protein sequence, read N- to C-terminus: Ornithine carbamoyltransferase (312 aa).

Residues 57 to 60 (STRT), Gln-84, Arg-108, and 135 to 138 (HPCQ) each bind carbamoyl phosphate. L-ornithine-binding positions include Asn-166, Asp-226, and 230-231 (SM). Residues 265 to 266 (CL) and Arg-293 contribute to the carbamoyl phosphate site.

The protein belongs to the aspartate/ornithine carbamoyltransferase superfamily. OTCase family.

It localises to the cytoplasm. The enzyme catalyses carbamoyl phosphate + L-ornithine = L-citrulline + phosphate + H(+). It functions in the pathway amino-acid biosynthesis; L-arginine biosynthesis; L-arginine from L-ornithine and carbamoyl phosphate: step 1/3. Functionally, reversibly catalyzes the transfer of the carbamoyl group from carbamoyl phosphate (CP) to the N(epsilon) atom of ornithine (ORN) to produce L-citrulline. In Brucella suis biovar 1 (strain 1330), this protein is Ornithine carbamoyltransferase.